Reading from the N-terminus, the 410-residue chain is Tyrosine--tRNA ligase (410 aa).

Tyrosine 36 serves as a coordination point for L-tyrosine. Positions 41–50 match the 'HIGH' region motif; it reads ATADSLTAGH. Positions 169 and 173 each coordinate L-tyrosine. A 'KMSKS' region motif is present at residues 229–233; sequence KMGKT. ATP is bound at residue lysine 232. In terms of domain architecture, S4 RNA-binding spans 343-409; it reads IDLITMMIDA…GKKAYHLFRA (67 aa).

The protein belongs to the class-I aminoacyl-tRNA synthetase family. TyrS type 1 subfamily. Homodimer.

It localises to the cytoplasm. The enzyme catalyses tRNA(Tyr) + L-tyrosine + ATP = L-tyrosyl-tRNA(Tyr) + AMP + diphosphate + H(+). In terms of biological role, catalyzes the attachment of tyrosine to tRNA(Tyr) in a two-step reaction: tyrosine is first activated by ATP to form Tyr-AMP and then transferred to the acceptor end of tRNA(Tyr). The sequence is that of Tyrosine--tRNA ligase from Lachnoclostridium phytofermentans (strain ATCC 700394 / DSM 18823 / ISDg) (Clostridium phytofermentans).